Here is a 595-residue protein sequence, read N- to C-terminus: Tyrosine-protein phosphatase cdcA (595 aa).

The disordered stretch occupies residues 32 to 57 (TPFPYPAEQPKSPSKRRAQASPSKKR). The span at 44 to 57 (PSKRRAQASPSKKR) shows a compositional bias: basic residues. Residues 233–381 (LPSTVSEVRS…QGSFREWWFE (149 aa)) enclose the Tyrosine-protein phosphatase domain. C322 functions as the Phosphocysteine intermediate in the catalytic mechanism. Positions 392-595 (QPNPVTPGRS…GSPVRVKAQA (204 aa)) are disordered. Positions 449 to 461 (RKSHRKDSRHHPY) are enriched in basic residues. Basic and acidic residues predominate over residues 471-483 (VDKDTRKTRRSTD). The span at 502-526 (SKSPAASPGQRSISYSATVTASYTL) shows a compositional bias: polar residues.

It belongs to the protein-tyrosine phosphatase family. Non-receptor class CDC14 subfamily.

The protein resides in the nucleus. The protein localises to the cytoplasm. It localises to the cell septum. It catalyses the reaction O-phospho-L-tyrosyl-[protein] + H2O = L-tyrosyl-[protein] + phosphate. Protein phosphatase which antagonizes mitotic cyclin-dependent kinase nimX, the inactivation of which is essential for exit from mitosis. To access its substrates, is released from nucleolar sequestration during mitosis. Plays an essential in coordinating the nuclear division cycle with cytokinesis through the cytokinesis checkpoint. Involved in chromosome segregation, where it is required for meiosis I spindle dissambly as well as for establishing two consecutive chromosome segregation phases. Required for the transcription of the two major endoglucanase genes eglA and eglB and growth on synthetic cellulose as the sole carbon source. This is Tyrosine-protein phosphatase cdcA (cdcA) from Emericella nidulans (strain FGSC A4 / ATCC 38163 / CBS 112.46 / NRRL 194 / M139) (Aspergillus nidulans).